We begin with the raw amino-acid sequence, 64 residues long: Myotoxin-2 (64 aa).

Positions lysine 1 to alanine 21 are cleaved as a signal peptide. Cysteine 32 and cysteine 51 form a disulfide bridge.

It belongs to the crotamine-myotoxin family. As to quaternary structure, monomer. Expressed by the venom gland.

Its subcellular location is the secreted. Functionally, cationic peptide that possesses multiple functions. It acts as a cell-penetrating peptide (CPP), and as a potent voltage-gated potassium channel (Kv) inhibitor. It exhibits antimicrobial activities, hind limb paralysis, and severe muscle necrosis by a non-enzymatic mechanism. In Crotalus durissus terrificus (South American rattlesnake), this protein is Myotoxin-2.